Consider the following 294-residue polypeptide: NAD kinase (294 aa).

Aspartate 73 functions as the Proton acceptor in the catalytic mechanism. NAD(+)-binding positions include 73 to 74 (DG), 147 to 148 (NE), histidine 158, arginine 175, aspartate 177, 188 to 193 (TAYSLS), and glutamine 249.

The protein belongs to the NAD kinase family. It depends on a divalent metal cation as a cofactor.

It localises to the cytoplasm. It carries out the reaction NAD(+) + ATP = ADP + NADP(+) + H(+). In terms of biological role, involved in the regulation of the intracellular balance of NAD and NADP, and is a key enzyme in the biosynthesis of NADP. Catalyzes specifically the phosphorylation on 2'-hydroxyl of the adenosine moiety of NAD to yield NADP. This chain is NAD kinase, found in Aeromonas salmonicida (strain A449).